A 488-amino-acid polypeptide reads, in one-letter code: NAD-reducing hydrogenase HoxS subunit beta (488 aa).

Ni(2+) contacts are provided by Cys62, Cys65, Cys458, and Cys461.

This sequence belongs to the [NiFe]/[NiFeSe] hydrogenase large subunit family. As to quaternary structure, tetramer of an alpha and a gamma subunits (flavin-containing dimer), and a delta and a nickel-containing beta subunits (hydrogenase dimer). The cofactor is FMN. It depends on Ni(2+) as a cofactor.

The protein localises to the cytoplasm. The enzyme catalyses H2 + NAD(+) = NADH + H(+). This chain is NAD-reducing hydrogenase HoxS subunit beta (hoxH), found in Cupriavidus necator (strain ATCC 17699 / DSM 428 / KCTC 22496 / NCIMB 10442 / H16 / Stanier 337) (Ralstonia eutropha).